Reading from the N-terminus, the 200-residue chain is Lipid A acyltransferase PagP (200 aa).

The N-terminal stretch at 1-24 (MRLKLTSHTCLFALSSLLVTPAFA) is a signal peptide. Residues His72, Asp115, and Ser116 contribute to the active site.

Belongs to the lipid A palmitoyltransferase family. Homodimer.

The protein localises to the cell outer membrane. The enzyme catalyses a lipid A + a 1,2-diacyl-sn-glycero-3-phosphocholine = a hepta-acyl lipid A + a 2-acyl-sn-glycero-3-phosphocholine. It catalyses the reaction a lipid IVA + a 1,2-diacyl-sn-glycero-3-phosphocholine = a lipid IVB + a 2-acyl-sn-glycero-3-phosphocholine. The catalysed reaction is a lipid IIA + a 1,2-diacyl-sn-glycero-3-phosphocholine = a lipid IIB + a 2-acyl-sn-glycero-3-phosphocholine. Its function is as follows. Transfers a fatty acid residue from the sn-1 position of a phospholipid to the N-linked hydroxyfatty acid chain on the proximal unit of lipid A or its precursors. In Dickeya dadantii (strain 3937) (Erwinia chrysanthemi (strain 3937)), this protein is Lipid A acyltransferase PagP.